Consider the following 140-residue polypeptide: MAGWQSYVDNLMCDGCCQEAAIVGYCDAKYVWAATAGGVFQSITPVEIDMIVGKDREGFFTNGLTLGAKKCSVIRDSLYVDGDCTMDIRTKSQGGEPTYNVAVGRAGRVLVFVMGKEGVHGGGLNKKAYSMAKYLRDSGF.

An N-acetylalanine modification is found at alanine 2.

Belongs to the profilin family. In terms of assembly, occurs in many kinds of cells as a complex with monomeric actin in a 1:1 ratio. Interacts with PFN2. Interacts with ACTMAP (via N-terminus); the interaction may facilitate efficient cleavage of the acetylated N-terminus of immature actin by ACTMAP.

The protein resides in the cytoplasm. The protein localises to the cytoskeleton. Functionally, binds to actin and affects the structure of the cytoskeleton. At high concentrations, profilin prevents the polymerization of actin, whereas it enhances it at low concentrations. By binding to PIP2, it inhibits the formation of IP3 and DG. The polypeptide is Profilin-2 (PFN2) (Bos taurus (Bovine)).